Consider the following 179-residue polypeptide: Large ribosomal subunit protein uL5 (179 aa).

It belongs to the universal ribosomal protein uL5 family. In terms of assembly, part of the 50S ribosomal subunit; part of the 5S rRNA/L5/L18/L25 subcomplex. Contacts the 5S rRNA and the P site tRNA. Forms a bridge to the 30S subunit in the 70S ribosome.

This is one of the proteins that bind and probably mediate the attachment of the 5S RNA into the large ribosomal subunit, where it forms part of the central protuberance. In the 70S ribosome it contacts protein S13 of the 30S subunit (bridge B1b), connecting the 2 subunits; this bridge is implicated in subunit movement. Contacts the P site tRNA; the 5S rRNA and some of its associated proteins might help stabilize positioning of ribosome-bound tRNAs. The polypeptide is Large ribosomal subunit protein uL5 (Prochlorococcus marinus (strain SARG / CCMP1375 / SS120)).